A 90-amino-acid polypeptide reads, in one-letter code: Cell division topological specificity factor (90 aa).

It belongs to the MinE family.

In terms of biological role, prevents the cell division inhibition by proteins MinC and MinD at internal division sites while permitting inhibition at polar sites. This ensures cell division at the proper site by restricting the formation of a division septum at the midpoint of the long axis of the cell. This chain is Cell division topological specificity factor, found in Francisella tularensis subsp. tularensis (strain FSC 198).